Consider the following 597-residue polypeptide: uncharacterized protein (597 aa).

Positions 1–23 (MSHEGSRQARDRGVTRSKAEKAR) are enriched in basic and acidic residues. Disordered stretches follow at residues 1 to 32 (MSHE…VPQV) and 171 to 192 (RESQ…NPRP). Low complexity predominate over residues 175-186 (EPTQSSEPSAEP). Ser-237 and Ser-241 each carry phosphoserine. 2 disordered regions span residues 302–335 (SLLS…MRLD) and 549–569 (EAEE…GVSK). Over residues 557 to 568 (APEQQPIQTGVS) the composition is skewed to polar residues.

This is an uncharacterized protein from Rattus norvegicus (Rat).